The primary structure comprises 407 residues: Ornithine cyclodeaminase (407 aa).

NAD(+) is bound by residues N233, A234, D312, T344, M345, L346, H347, D365, D388, and V389.

Belongs to the AgrE/ArgZ ornithine cyclodeaminase family. It depends on NAD(+) as a cofactor.

The enzyme catalyses L-ornithine = L-proline + NH4(+). Catalyzes the conversion of ornithine to proline, with the release of ammonia. The protein is Ornithine cyclodeaminase of Archaeoglobus fulgidus (strain ATCC 49558 / DSM 4304 / JCM 9628 / NBRC 100126 / VC-16).